The following is a 358-amino-acid chain: Mannonate dehydratase (358 aa).

The protein belongs to the mannonate dehydratase family. It depends on Fe(2+) as a cofactor. The cofactor is Mn(2+).

The enzyme catalyses D-mannonate = 2-dehydro-3-deoxy-D-gluconate + H2O. It functions in the pathway carbohydrate metabolism; pentose and glucuronate interconversion. Catalyzes the dehydration of D-mannonate. In Lachnoclostridium phytofermentans (strain ATCC 700394 / DSM 18823 / ISDg) (Clostridium phytofermentans), this protein is Mannonate dehydratase.